The primary structure comprises 127 residues: Large ribosomal subunit protein bL12 (127 aa).

This sequence belongs to the bacterial ribosomal protein bL12 family. As to quaternary structure, homodimer. Part of the ribosomal stalk of the 50S ribosomal subunit. Forms a multimeric L10(L12)X complex, where L10 forms an elongated spine to which 2 to 4 L12 dimers bind in a sequential fashion. Binds GTP-bound translation factors.

Its function is as follows. Forms part of the ribosomal stalk which helps the ribosome interact with GTP-bound translation factors. Is thus essential for accurate translation. The sequence is that of Large ribosomal subunit protein bL12 from Syntrophobacter fumaroxidans (strain DSM 10017 / MPOB).